A 622-amino-acid chain; its full sequence is Dehydrogenase xptC (622 aa).

The first 18 residues, 1–18, serve as a signal peptide directing secretion; the sequence is MAKLSVILLFRSLLLCGA. Residues 47 to 48, 68 to 69, and 123 to 126 contribute to the FAD site; these read VS, EA, and NAMI. N-linked (GlcNAc...) asparagine glycosylation is found at N160, N173, N357, N364, and N480. Position 598 to 599 (598 to 599) interacts with FAD; it reads PM.

The protein belongs to the GMC oxidoreductase family. In terms of assembly, homodimer. FAD is required as a cofactor.

The protein operates within secondary metabolite biosynthesis. Functionally, dehydrogenase involved in the conversion of monodictyphenone to the prenyl xanthones such as emericellin, shamixanthone and epishamixanthone. Monodictyphenone is first converted to variecoxanthone A via a paeciloxanthone intermediate by the consecutive actions of the FAD-dependent monooxygenase mdpD and the xanthone prenyltransferase xptB. XptB catalyzes regular O-prenylation at the hydroxy group of C-7 of the xanthone ring. Variecoxanthone A is further prenylated to emericellin by xptA before being reduced to shamixanthone and epishamixanthone by the dehydrogenase xptC. This Emericella nidulans (strain FGSC A4 / ATCC 38163 / CBS 112.46 / NRRL 194 / M139) (Aspergillus nidulans) protein is Dehydrogenase xptC.